The following is a 397-amino-acid chain: Putative efflux system protein YvrP (397 aa).

A helical transmembrane segment spans residues 8 to 28 (LIGGAICAGVLVLAGIGAGGF). Residues 106 to 183 (EDHSDEVEQA…KELAGLTKNK (78 aa)) adopt a coiled-coil conformation.

This sequence belongs to the membrane fusion protein (MFP) (TC 8.A.1) family.

It is found in the cell membrane. This is Putative efflux system protein YvrP (yvrP) from Bacillus subtilis (strain 168).